The primary structure comprises 856 residues: MAP kinase phosphatase with leucine-rich repeats protein 3 (856 aa).

Residues 1–10 show a composition bias toward low complexity; it reads MGNSHSSENG. Disordered regions lie at residues 1-24, 84-195, and 214-326; these read MGNS…GGGS, VKKN…SSVL, and DDNS…NAKD. A lipid anchor (N-myristoyl glycine) is attached at Gly-2. Over residues 11 to 24 the composition is skewed to gly residues; the sequence is GNSGSGGGSGGGGS. A compositionally biased stretch (low complexity) spans 90-142; it reads NSSNNNSNNNSNNNNNNNTLNNSTIITTTTTTTTTSTPTTTIMITPPQQQQQQ. Positions 155 to 165 are enriched in polar residues; it reads ESSTPNEQQIR. Composition is skewed to low complexity over residues 178–195 and 224–243; these read ESSF…SSVL and QQQQ…QQTQ. 2 stretches are compositionally biased toward polar residues: residues 254–265 and 272–281; these read IVNNKSSSTTNI and AQTSRSTSIP. A compositionally biased stretch (low complexity) spans 306-323; that stretch reads NSLSSSNIITPNNTTNTN. LRR repeat units follow at residues 344–365, 370–391, 392–413, 416–437, 439–461, 462–484, 485–506, and 507–528; these read KIFS…ILSI, EIQE…QLVK, SLTT…VFIE, SLTS…IDQI, NLKY…SNLS, QLIS…DDLI, NLRM…RKLV, and NLVT…FAYL. The interval 554 to 577 is disordered; that stretch reads NINSNNNDSNNSNNNNNNNNDNNN. A Tyrosine-protein phosphatase domain is found at 632-773; it reads IPSEIIPGIF…LLKYEAKLFC (142 aa). Catalysis depends on Cys-717, which acts as the Phosphocysteine intermediate. The disordered stretch occupies residues 810–856; it reads INNSSNSNNNNSTDNSNNSSTSTTPNLSSLSSDSSSSASLSKLSISK.

It belongs to the protein-tyrosine phosphatase family. Non-receptor class dual specificity subfamily.

It catalyses the reaction O-phospho-L-tyrosyl-[protein] + H2O = L-tyrosyl-[protein] + phosphate. The enzyme catalyses O-phospho-L-seryl-[protein] + H2O = L-seryl-[protein] + phosphate. It carries out the reaction O-phospho-L-threonyl-[protein] + H2O = L-threonyl-[protein] + phosphate. Probable phosphatase with dual specificity toward Ser/Thr and Tyr-containing proteins. This chain is MAP kinase phosphatase with leucine-rich repeats protein 3 (mpl3), found in Dictyostelium discoideum (Social amoeba).